A 375-amino-acid chain; its full sequence is Protein GOLM2 (375 aa).

The Cytoplasmic segment spans residues 1–12; the sequence is MVGFGANRRGGR. Residues 13–33 traverse the membrane as a helical; Signal-anchor for type II membrane protein segment; that stretch reads LPSFLLAALLLVIAVLAFNCW. Residues 34-198 adopt a coiled-coil conformation; it reads NAASRQAVLR…REQKATQRIQ (165 aa). Residues 34 to 375 are Lumenal-facing; it reads NAASRQAVLR…SKPRFGDGVL (342 aa). Disordered regions lie at residues 81-102, 193-327, and 342-375; these read LEQKEADYSQLSSQLQARDGQV, ATQR…DSQN, and RAVGLQKMKQNDEERDLQNDLVDYSKPRFGDGVL. 2 stretches are compositionally biased toward basic and acidic residues: residues 193–204 and 350–375; these read ATQRIQSSKDAE and KQNDEERDLQNDLVDYSKPRFGDGVL.

It belongs to the GOLM family.

The protein resides in the membrane. The sequence is that of Protein GOLM2 (GOLM2) from Gallus gallus (Chicken).